We begin with the raw amino-acid sequence, 336 residues long: UDP-N-acetylmuramoylpentapeptide-lysine N(6)-alanyltransferase (336 aa).

Residues 37–40, tyrosine 104, arginine 212, tyrosine 216, and tyrosine 257 contribute to the substrate site; that span reads KNNW.

The protein belongs to the FemABX family.

It catalyses the reaction UDP-N-acetyl-alpha-D-muramoyl-L-alanyl-gamma-D-glutamyl-L-lysyl-D-alanyl-D-alanine + L-alanyl-tRNA(Ala) = UDP-N-acetyl-alpha-D-muramoyl-L-alanyl-gamma-D-glutamyl-N(6)-(L-alanyl)-L-lysyl-D-alanyl-D-alanine + tRNA(Ala) + H(+). In terms of biological role, involved in the synthesis of the bacterial cell wall. Catalyzes the addition of alanine into the interchain peptide bridge of peptidoglycan precursor using aminoacyl-tRNA(Ala) as amino acid donor. This alanine is added to the epsilon-amino group of the L-lysine of the peptidoglycan UDP-N-acetyl-alpha-D-muramoyl-L-alanyl-D-glutamyl-L-lysyl-D-alanyl-D-alanine, in a ribosome-independent mechanism. Specific for UDP-N-acetyl-muramoyl-pentapeptide. Has no activity toward UDP-N-acetyl-muramoyl-tetrapeptide or UDP-N-acetyl-muramoyl-tripeptide. Also acts on L-seryl-tRNA(Ser). In Weissella viridescens (Lactobacillus viridescens), this protein is UDP-N-acetylmuramoylpentapeptide-lysine N(6)-alanyltransferase.